The chain runs to 99 residues: Integration host factor subunit alpha (99 aa).

The protein belongs to the bacterial histone-like protein family. As to quaternary structure, heterodimer of an alpha and a beta chain.

In terms of biological role, this protein is one of the two subunits of integration host factor, a specific DNA-binding protein that functions in genetic recombination as well as in transcriptional and translational control. In Alteromonas mediterranea (strain DSM 17117 / CIP 110805 / LMG 28347 / Deep ecotype), this protein is Integration host factor subunit alpha.